The chain runs to 139 residues: S-protein homolog 14 (139 aa).

Residues 1 to 20 (MNRFIIFMFVVVTYFGLNVA) form the signal peptide. The N-linked (GlcNAc...) asparagine glycan is linked to asparagine 136.

It belongs to the plant self-incompatibility (S1) protein family.

The protein resides in the secreted. This Arabidopsis thaliana (Mouse-ear cress) protein is S-protein homolog 14.